Here is a 185-residue protein sequence, read N- to C-terminus: Dirigent protein 12 (185 aa).

A signal peptide spans 1-25 (MTNQIYKQVFSFFLSVLLLQSSTVS). Cysteine 37 and cysteine 184 form a disulfide bridge. 2 N-linked (GlcNAc...) asparagine glycosylation sites follow: asparagine 56 and asparagine 120.

The protein belongs to the plant dirigent protein family. Homodimer. As to expression, seed coat specific expression.

The protein resides in the secreted. It is found in the extracellular space. It localises to the apoplast. Its function is as follows. Dirigent proteins impart stereoselectivity on the phenoxy radical-coupling reaction, yielding optically active lignans from two molecules of coniferyl alcohol in the biosynthesis of lignans, flavonolignans, and alkaloids and thus plays a central role in plant secondary metabolism. Required for seed accumulation of neolignans. This Arabidopsis thaliana (Mouse-ear cress) protein is Dirigent protein 12 (DIR12).